The following is a 345-amino-acid chain: MPRVYIGRLSYNVREKDIQRFFSGYGRLLGIDLKNGYGFVEFEDSRDADDAVYELNGKELCGERVIVEHARGPRRDRDGYSYGSRSGGGGYSSRRTSGRDKYGPPVRTEFRLIVENLSSRCSWQDLKDFMRQAGEVTYADAHKERTNEGVIEFRSYSDMKRALDKLDGTEINGRNIRLIEDKPRTSHRRSYSGSRSRSRSRRRSRSRSRRSSRSRSRSISKSRSRSRSRSKGRSRSRSKGRKSRSKSKSKPKSDRGSRSRSRSRSKDEYEKSRSRSRSRSRSPKENGKGDIKSKSRSRSQSRSDSPLPAPPSKARSVSPPPKRASRSHSRSRSKSRSRSRSSSRD.

Positions 1 to 72 constitute an RRM 1 domain; that stretch reads MPRVYIGRLS…ERVIVEHARG (72 aa). A phosphoserine mark is found at serine 45, serine 81, and serine 84. The interval 75-102 is disordered; it reads RDRDGYSYGSRSGGGGYSSRRTSGRDKY. In terms of domain architecture, RRM 2 spans 110–183; that stretch reads FRLIVENLSS…RNIRLIEDKP (74 aa). The residue at position 165 (lysine 165) is an N6-acetyllysine. Residues 176-345 are disordered; sequence IRLIEDKPRT…RSRSRSSSRD (170 aa). Residue lysine 182 forms a Glycyl lysine isopeptide (Lys-Gly) (interchain with G-Cter in SUMO2) linkage. Residues 185–250 show a composition bias toward basic residues; the sequence is TSHRRSYSGS…RKSRSKSKSK (66 aa). Composition is skewed to basic and acidic residues over residues 264-273 and 282-293; these read RSKDEYEKSR and SPKENGKGDIKS. A phosphoserine mark is found at serine 299 and serine 301. The residue at position 305 (serine 305) is a Phosphoserine; by DYRK1A. Serine 316 and serine 318 each carry phosphoserine. Positions 323–345 are enriched in basic residues; that stretch reads RASRSHSRSRSKSRSRSRSSSRD.

This sequence belongs to the splicing factor SR family. Binds SREK1/SFRS12. Interacts with DYRK1A. Post-translationally, extensively phosphorylated on serine residues in the RS domain. Phosphorylated by DYRK1A, probably in the RS domain. Phosphorylation by DYRK1A modulates alternative splice site selection and inhibits the expression of MAPT/Tau exon 10.

It localises to the nucleus. The protein resides in the nucleus speckle. In terms of biological role, plays a role in constitutive splicing and modulates the selection of alternative splice sites. Plays a role in the alternative splicing of MAPT/Tau exon 10. Binds to alternative exons of TNC pre-mRNA and promotes the expression of alternatively spliced TNC. Plays a role in wound healing and in the regulation of keratinocyte differentiation and proliferation via its role in alternative splicing. This Bos taurus (Bovine) protein is Serine/arginine-rich splicing factor 6 (SRSF6).